Consider the following 342-residue polypeptide: Phosphoribosylformylglycinamidine cyclo-ligase (342 aa).

Belongs to the AIR synthase family.

It localises to the cytoplasm. The enzyme catalyses 2-formamido-N(1)-(5-O-phospho-beta-D-ribosyl)acetamidine + ATP = 5-amino-1-(5-phospho-beta-D-ribosyl)imidazole + ADP + phosphate + H(+). It participates in purine metabolism; IMP biosynthesis via de novo pathway; 5-amino-1-(5-phospho-D-ribosyl)imidazole from N(2)-formyl-N(1)-(5-phospho-D-ribosyl)glycinamide: step 2/2. This is Phosphoribosylformylglycinamidine cyclo-ligase from Latilactobacillus sakei subsp. sakei (strain 23K) (Lactobacillus sakei subsp. sakei).